The sequence spans 158 residues: UPF0266 membrane protein YobD (158 aa).

Transmembrane regions (helical) follow at residues 6–26 (LVLI…QFIM), 45–65 (IDSV…VTNH), and 67–87 (ALIT…IFWI).

It belongs to the UPF0266 family.

It is found in the cell inner membrane. This is UPF0266 membrane protein YobD from Shigella boydii serotype 4 (strain Sb227).